Here is a 66-residue protein sequence, read N- to C-terminus: Small ribosomal subunit protein bS21 (66 aa).

The protein belongs to the bacterial ribosomal protein bS21 family.

The chain is Small ribosomal subunit protein bS21 from Solidesulfovibrio magneticus (strain ATCC 700980 / DSM 13731 / RS-1) (Desulfovibrio magneticus).